A 179-amino-acid polypeptide reads, in one-letter code: MISRSFLRLANPARRAMPAVKRVNMMPSMALPTKRLYHEKVLDHYSNPRNVGTLNKLDVDVGTGLVGAPACGDVMRLQIQVDDETGVIKDVKFKTFGCGSAIASSSYLTELVKGKTIEEAVKIKNTAIAKELSLPPVKLHCSMLAEDAIKSAVKDYRSKRSVKQPTLGPEAAQAETIAT.

The interval 160–179 (RSVKQPTLGPEAAQAETIAT) is disordered.

This sequence belongs to the NifU family. In terms of assembly, component of the core Fe-S cluster (ISC) assembly machinery. [2Fe-2S] cluster serves as cofactor.

The protein localises to the mitochondrion matrix. It functions in the pathway cofactor biosynthesis; iron-sulfur cluster biosynthesis. Scaffold protein for the de novo synthesis of iron-sulfur (Fe-S) clusters within mitochondria, which is required for maturation of both mitochondrial and cytoplasmic [2Fe-2S] and [4Fe-4S] proteins. First, a [2Fe-2S] cluster is transiently assembled on the scaffold protein ISU1. In a second step, the cluster is released from ISU1, transferred to a glutaredoxin, followed by the formation of mitochondrial [2Fe-2S] proteins, the synthesis of [4Fe-4S] clusters and their target-specific insertion into the recipient apoproteins. Cluster assembly on ISU1 depends on the function of the cysteine desulfurase complex NFS1-ISD11, which serves as the sulfur donor for cluster synthesis, the iron-binding protein frataxin as the putative iron donor, and the electron transfer chain comprised of ferredoxin reductase and ferredoxin, which receive their electrons from NADH. The protein is Iron sulfur cluster assembly protein 1, mitochondrial (ISU1) of Debaryomyces hansenii (strain ATCC 36239 / CBS 767 / BCRC 21394 / JCM 1990 / NBRC 0083 / IGC 2968) (Yeast).